Here is a 521-residue protein sequence, read N- to C-terminus: Importin subunit alpha-4 (521 aa).

The tract at residues 1–29 is disordered; that stretch reads MAENPSLENHRIKSFKNKGRDVETMRRHR. Alanine 2 is subject to N-acetylalanine. The 57-residue stretch at 2–58 folds into the IBB domain; sequence AENPSLENHRIKSFKNKGRDVETMRRHRNEVTVELRKNKRDEHLLKKRNVPQEESLE. Over residues 18–29 the composition is skewed to basic and acidic residues; the sequence is KGRDVETMRRHR. The Nuclear localization signal signature appears at 43 to 52; sequence EHLLKKRNVP. Serine 56 and serine 60 each carry phosphoserine. One copy of the ARM 1; truncated repeat lies at 66-106; that stretch reads FKAQNVTLEAILQNATSDNPVVQLSAVQAARKLLSSDRNPP. ARM repeat units follow at residues 107–149, 150–194, 195–233, 234–278, 279–318, 319–360, 361–400, and 401–443; these read IDDL…TSAQ, TQAV…CRDY, VISLGVVKPLLSFISPSIPITFLRNVTWVIVNLCRNKDP, PPPM…EQIQ, MVIDSGVVPFLVPLLSHQEVKVQTAALRAVGNIVTGTDEQ, TQVV…NQQQ, VQAVIDAGLIPMIIHQLAKGDFGTQKEAAWAISNLTISGR, and KDQV…IMAG. The tract at residues 137-229 is NLS binding site (major); it reads WALTNIASGT…VTWVIVNLCR (93 aa). The tract at residues 306 to 394 is NLS binding site (minor); that stretch reads RAVGNIVTGT…QKEAAWAISN (89 aa). An ARM 10; atypical repeat occupies 447–485; the sequence is STIAEIIEECGGLEKIEVLQQHENEDIYKLAFEIIDQYF. A Phosphotyrosine modification is found at tyrosine 484.

This sequence belongs to the importin alpha family. Forms a complex with importin subunit beta-1. Interacts with DDX21. Interacts with NCBP1, NCBP2/CBP20 and NCBP3. Interacts with RCC1. Interacts with ZC3H11A. As to quaternary structure, (Microbial infection) Interacts with HIV-1 integrase; this interaction might play a role in nuclear import of HIV pre-integration complex. In terms of assembly, (Microbial infection) Interacts with influenza virus nucleoprotein; this interaction might play a role in nuclear import of viral genome. As to expression, ubiquitous. Highest levels in heart and skeletal muscle.

Its subcellular location is the cytoplasm. The protein localises to the nucleus. Its function is as follows. Functions in nuclear protein import as an adapter protein for nuclear receptor KPNB1. Binds specifically and directly to substrates containing either a simple or bipartite NLS motif. Docking of the importin/substrate complex to the nuclear pore complex (NPC) is mediated by KPNB1 through binding to nucleoporin FxFG repeats and the complex is subsequently translocated through the pore by an energy requiring, Ran-dependent mechanism. At the nucleoplasmic side of the NPC, Ran binds to importin-beta and the three components separate and importin-alpha and -beta are re-exported from the nucleus to the cytoplasm where GTP hydrolysis releases Ran from importin. The directionality of nuclear import is thought to be conferred by an asymmetric distribution of the GTP- and GDP-bound forms of Ran between the cytoplasm and nucleus. In vitro, mediates the nuclear import of human cytomegalovirus UL84 by recognizing a non-classical NLS. Recognizes NLSs of influenza A virus nucleoprotein probably through ARM repeats 7-9. This chain is Importin subunit alpha-4 (KPNA3), found in Homo sapiens (Human).